The chain runs to 396 residues: NADH-quinone oxidoreductase subunit D (396 aa).

Belongs to the complex I 49 kDa subunit family. In terms of assembly, NDH-1 is composed of 14 different subunits. Subunits NuoB, C, D, E, F, and G constitute the peripheral sector of the complex.

The protein localises to the cell inner membrane. It catalyses the reaction a quinone + NADH + 5 H(+)(in) = a quinol + NAD(+) + 4 H(+)(out). Its function is as follows. NDH-1 shuttles electrons from NADH, via FMN and iron-sulfur (Fe-S) centers, to quinones in the respiratory chain. The immediate electron acceptor for the enzyme in this species is believed to be ubiquinone. Couples the redox reaction to proton translocation (for every two electrons transferred, four hydrogen ions are translocated across the cytoplasmic membrane), and thus conserves the redox energy in a proton gradient. The chain is NADH-quinone oxidoreductase subunit D from Methylobacterium radiotolerans (strain ATCC 27329 / DSM 1819 / JCM 2831 / NBRC 15690 / NCIMB 10815 / 0-1).